Here is a 475-residue protein sequence, read N- to C-terminus: Cytosolic non-specific dipeptidase (475 aa).

Residue Lys-9 is modified to N6-acetyllysine. At Ser-58 the chain carries Phosphoserine. His-99 is a Mn(2+) binding site. Asp-101 is a catalytic residue. Asp-132 contributes to the Mn(2+) binding site. Glu-166 functions as the Proton acceptor in the catalytic mechanism. Residues 166–167, Asp-195, His-228, Thr-330, Arg-343, Ser-417, and His-445 contribute to the substrate site; that span reads EE. Glu-167 and Asp-195 together coordinate Mn(2+). His-445 is a binding site for Mn(2+).

This sequence belongs to the peptidase M20A family. In terms of assembly, homodimer. Requires Mn(2+) as cofactor.

It localises to the cytoplasm. The catalysed reaction is Hydrolysis of dipeptides, preferentially hydrophobic dipeptides including prolyl amino acids.. It catalyses the reaction L-threonyl-L-threonine + H2O = 2 L-threonine. The enzyme catalyses L-threonyl-L-serine + H2O = L-threonine + L-serine. It carries out the reaction L-seryl-L-threonine + H2O = L-threonine + L-serine. The catalysed reaction is L-cysteinylglycine + H2O = L-cysteine + glycine. It catalyses the reaction L-alanyl-L-cysteine + H2O = L-cysteine + L-alanine. The enzyme catalyses (S)-lactate + L-phenylalanine = N-[(S)-lactoyl]-L-phenylalanine + H2O. In terms of biological role, catalyzes the peptide bond hydrolysis in dipeptides, displaying a non-redundant activity toward threonyl dipeptides. Mediates threonyl dipeptide catabolism in a tissue-specific way. Has high dipeptidase activity toward cysteinylglycine, an intermediate metabolite in glutathione metabolism. Metabolizes N-lactoyl-amino acids, both through hydrolysis to form lactic acid and amino acids, as well as through their formation by reverse proteolysis. Plays a role in the regulation of cell cycle arrest and apoptosis. The chain is Cytosolic non-specific dipeptidase (CNDP2) from Bos taurus (Bovine).